A 309-amino-acid chain; its full sequence is Ubiquitin domain-containing protein UBFD1 (309 aa).

A disordered region spans residues 1–80 (MAAAGAPDGM…VSNGEDAGGG (80 aa)). A compositionally biased stretch (acidic residues) spans 9-19 (GMEEPGMDTEA). Over residues 35-57 (EAEAAAGAAAEDSGAARGSLQPA) the composition is skewed to low complexity. The region spanning 84–159 (ELVDLKIIWN…IMVVGSTIND (76 aa)) is the Ubiquitin-like domain. A disordered region spans residues 171–204 (QQDAKAEENKKEPLCRQKQHRKVLDKGKPEDVMP). 2 stretches are compositionally biased toward basic and acidic residues: residues 174–185 (AKAEENKKEPLC) and 192–201 (KVLDKGKPED).

Binds polyubiquitin.

In terms of biological role, may play a role as NF-kappa-B regulator. The sequence is that of Ubiquitin domain-containing protein UBFD1 (UBFD1) from Homo sapiens (Human).